The sequence spans 199 residues: Replication protein (199 aa).

This sequence belongs to the Gram-positive plasmids replication protein type 2 family.

Is essential for plasmid replication. Nicks the positive strand at the plus origin of replication. The polypeptide is Replication protein (repF) (Staphylococcus aureus).